The following is a 147-amino-acid chain: Augurin (147 aa).

An N-terminal signal peptide occupies residues 1 to 31 (MANSSARPAFLVMTALALLLLLCVGPGGISG). 2 consecutive propeptides follow at residues 32–68 (NKLK…LRRP) and 132–147 (SAHS…YDDY).

The protein belongs to the augurin family.

It is found in the secreted. The protein localises to the cytoplasm. The protein resides in the apical cell membrane. Its function is as follows. Probable hormone that may attenuate cell proliferation and induce senescence of oligodendrocyte and neural precursor cells in the central nervous system. ECRG4-induced senescence is characterized by G1 arrest, RB1 dephosphorylation and accelerated CCND1 and CCND3 proteasomal degradation. The polypeptide is Augurin (Bos taurus (Bovine)).